Consider the following 110-residue polypeptide: Insulin (110 aa).

The first 24 residues, 1 to 24 (MALWMRLLPLLAFLILWEPSPAHA), serve as a signal peptide directing secretion. 3 disulfides stabilise this stretch: C31/C96, C43/C109, and C95/C100. The propeptide at 57-87 (GVDDPQMPQLELGGSPGAGDLRALALEVARQ) is c peptide.

This sequence belongs to the insulin family. Heterodimer of a B chain and an A chain linked by two disulfide bonds.

Its subcellular location is the secreted. In terms of biological role, insulin decreases blood glucose concentration. It increases cell permeability to monosaccharides, amino acids and fatty acids. It accelerates glycolysis, the pentose phosphate cycle, and glycogen synthesis in liver. The chain is Insulin (INS) from Psammomys obesus (Fat sand rat).